We begin with the raw amino-acid sequence, 409 residues long: Elongation factor Tu, chloroplastic (409 aa).

Residues 10-214 (KPHVNIGTIG…NVDSYIPTPA (205 aa)) form the tr-type G domain. The segment at 19–26 (GHVDHGKT) is G1. 19–26 (GHVDHGKT) provides a ligand contact to GTP. Thr26 contacts Mg(2+). The interval 60 to 64 (GITIN) is G2. The segment at 81–84 (DCPG) is G3. Residues 81-85 (DCPGH) and 136-139 (NKED) contribute to the GTP site. Residues 136–139 (NKED) are G4. The interval 174–176 (SAL) is G5.

It belongs to the TRAFAC class translation factor GTPase superfamily. Classic translation factor GTPase family. EF-Tu/EF-1A subfamily.

It localises to the plastid. The protein localises to the chloroplast. The enzyme catalyses GTP + H2O = GDP + phosphate + H(+). GTP hydrolase that promotes the GTP-dependent binding of aminoacyl-tRNA to the A-site of ribosomes during protein biosynthesis. The protein is Elongation factor Tu, chloroplastic (tufA) of Ostreococcus tauri.